The following is a 505-amino-acid chain: uncharacterized protein (505 aa).

A helical membrane pass occupies residues 11–27; that stretch reads IGIIGGGIVGWLAAIAL.

It is found in the membrane. This is an uncharacterized protein from Sinorhizobium fredii (strain NBRC 101917 / NGR234).